Here is a 675-residue protein sequence, read N- to C-terminus: PTS system glucose-specific EIICBA component (675 aa).

The 412-residue stretch at 3–414 (KKFFGQLQRI…FNFKTPGRED (412 aa)) folds into the PTS EIIC type-1 domain. A run of 11 helical transmembrane segments spans residues 16 to 36 (LMLP…GNAF), 63 to 83 (AGGI…AIGL), 89 to 109 (VAAI…GMFL), 126 to 146 (VLGI…GALA), 170 to 190 (FVPI…AIIW), 199 to 219 (AFSE…FGFI), 273 to 293 (FMQG…LAIY), 303 to 323 (VVAG…ITEP), 329 to 349 (LFVA…SFLI), 355 to 375 (LHLG…GILP), and 383 to 403 (VIPV…FLIV). In terms of domain architecture, PTS EIIB type-1 spans 425–506 (SELPFKVLDA…QQIMDGKITS (82 aa)). Cys-447 serves as the catalytic Phosphocysteine intermediate; for EIIB activity. In terms of domain architecture, PTS EIIA type-1 spans 547 to 651 (DKVFSEKMMG…STITPIVVTN (105 aa)). His-599 serves as the catalytic Tele-phosphohistidine intermediate; for EIIA activity.

Its subcellular location is the cell membrane. The catalysed reaction is N(pros)-phospho-L-histidyl-[protein] + D-glucose(out) = D-glucose 6-phosphate(in) + L-histidyl-[protein]. Its activity is regulated as follows. Inhibited by 2-deoxyglucose and methyl beta-D-glucoside, but not by methyl alpha-D-glucoside, p-nitrophenyl alpha-D-glucoside, o-nitrophenyl beta-D-glucoside and salicin. Its function is as follows. The phosphoenolpyruvate-dependent sugar phosphotransferase system (sugar PTS), a major carbohydrate active transport system, catalyzes the phosphorylation of incoming sugar substrates concomitantly with their translocation across the cell membrane. This system is involved in glucose transport. Cannot transport galactose, fructose, mannose, cellobiose, sucrose, maltose, lactose, melibiose and trehalose, as well as N-acetylglucosamine. The polypeptide is PTS system glucose-specific EIICBA component (ptsG) (Staphylococcus carnosus (strain TM300)).